A 1199-amino-acid chain; its full sequence is Putative mitoferrin (1199 aa).

The helical transmembrane segment at Val-32–Met-52 threads the bilayer. Asn-92, Asn-171, Asn-208, Asn-268, Asn-326, Asn-353, Asn-443, Asn-499, Asn-539, Asn-649, Asn-708, Asn-715, and Asn-723 each carry an N-linked (GlcNAc...) asparagine glycan. A helical transmembrane segment spans residues Gly-730–Glu-750. N-linked (GlcNAc...) asparagine glycans are attached at residues Asn-763 and Asn-772. Residues Leu-792–Ile-873 form a Solcar 1 repeat. The next 2 membrane-spanning stretches (helical) occupy residues Phe-795–Ile-815 and Leu-845–Cys-865. N-linked (GlcNAc...) asparagine glycosylation is found at Asn-914, Asn-922, Asn-965, Asn-1013, Asn-1022, Asn-1041, and Asn-1056. The Solcar 2 repeat unit spans residues Ser-1109–Phe-1191. Residues Phe-1111–Ile-1131 traverse the membrane as a helical segment.

The protein belongs to the mitochondrial carrier (TC 2.A.29) family.

The protein resides in the mitochondrion membrane. Its function is as follows. Putative iron transporter. In Plasmodium falciparum (isolate 3D7), this protein is Putative mitoferrin.